A 362-amino-acid chain; its full sequence is Chorismate synthase (362 aa).

Arg47 is an NADP(+) binding site. FMN contacts are provided by residues 124 to 126 (RSS), Gly286, 301 to 305 (KPTAT), and Arg327.

Belongs to the chorismate synthase family. As to quaternary structure, homotetramer. FMNH2 serves as cofactor.

The catalysed reaction is 5-O-(1-carboxyvinyl)-3-phosphoshikimate = chorismate + phosphate. Its pathway is metabolic intermediate biosynthesis; chorismate biosynthesis; chorismate from D-erythrose 4-phosphate and phosphoenolpyruvate: step 7/7. Functionally, catalyzes the anti-1,4-elimination of the C-3 phosphate and the C-6 proR hydrogen from 5-enolpyruvylshikimate-3-phosphate (EPSP) to yield chorismate, which is the branch point compound that serves as the starting substrate for the three terminal pathways of aromatic amino acid biosynthesis. This reaction introduces a second double bond into the aromatic ring system. The chain is Chorismate synthase from Synechococcus elongatus (strain ATCC 33912 / PCC 7942 / FACHB-805) (Anacystis nidulans R2).